A 534-amino-acid chain; its full sequence is ATP-dependent RNA helicase DBP3 (534 aa).

Positions Met1–Gln96 are disordered. The segment covering Glu8–Glu30 has biased composition (basic and acidic residues). Over residues Lys31 to Lys53 the composition is skewed to basic residues. Residues Glu54–Glu63 show a composition bias toward basic and acidic residues. Residues Ser82 to Ser92 are compositionally biased toward low complexity. A Q motif motif is present at residues Leu131–Ser157. In terms of domain architecture, Helicase ATP-binding spans Trp160 to Val330. Position 173–180 (Ala173–Thr180) interacts with ATP. Positions Asp278 to Asp281 match the DEAD box motif. A Helicase C-terminal domain is found at Arg359 to Gly504.

The protein belongs to the DEAD box helicase family. DDX5/DBP2 subfamily.

It localises to the nucleus. It is found in the nucleolus. The catalysed reaction is ATP + H2O = ADP + phosphate + H(+). In terms of biological role, ATP-dependent RNA helicase required for 60S ribosomal subunit synthesis. Involved in efficient pre-rRNA processing, predominantly at site A3, which is necessary for the normal formation of 25S and 5.8S rRNAs. This chain is ATP-dependent RNA helicase DBP3 (DBP3), found in Meyerozyma guilliermondii (strain ATCC 6260 / CBS 566 / DSM 6381 / JCM 1539 / NBRC 10279 / NRRL Y-324) (Yeast).